The sequence spans 430 residues: UPF0597 protein CV_1824 (430 aa).

This sequence belongs to the UPF0597 family.

The polypeptide is UPF0597 protein CV_1824 (Chromobacterium violaceum (strain ATCC 12472 / DSM 30191 / JCM 1249 / CCUG 213 / NBRC 12614 / NCIMB 9131 / NCTC 9757 / MK)).